The primary structure comprises 360 residues: Aminomethyltransferase (360 aa).

It belongs to the GcvT family. As to quaternary structure, the glycine cleavage system is composed of four proteins: P, T, L and H.

The enzyme catalyses N(6)-[(R)-S(8)-aminomethyldihydrolipoyl]-L-lysyl-[protein] + (6S)-5,6,7,8-tetrahydrofolate = N(6)-[(R)-dihydrolipoyl]-L-lysyl-[protein] + (6R)-5,10-methylene-5,6,7,8-tetrahydrofolate + NH4(+). The glycine cleavage system catalyzes the degradation of glycine. The sequence is that of Aminomethyltransferase from Legionella pneumophila (strain Paris).